Reading from the N-terminus, the 1048-residue chain is Putative cation efflux system protein SilA (1048 aa).

Transmembrane regions (helical) follow at residues 14–34 (FLVMMGALFLSIWGTWTIINT), 125–145 (VSSEIGPDATGVGWIFEYALV), 338–358 (LSSKLLEEFFVVAIVCALFLW), 363–383 (ALVAIISLPLGLCIAFIVMHF), 391–411 (MSLGGIAIAVGAMVDAAIVMI), 446–466 (VGPALFISLLIITLSFIPIFT), 485–505 (SMAGAAALAIIVIPILMGFWI), 539–559 (TLLVAALSIFTVVWPLSQVGG), 737–757 (GMTVGDVQLFVSSAIGGAMVG), 871–891 (KLKLMVPMTVMIIFILLYLAF), 897–917 (ALLILMSLPFALVGGIWFLYW), 928–948 (TGFIALAGVAAEFGVVMLMYL), 985–1005 (AMTVAVIIAGLLPILWGTGAG), and 1012–1032 (IAAPMIGGMITAPLLSLFIIP).

Belongs to the resistance-nodulation-cell division (RND) (TC 2.A.6) family.

The protein localises to the cell inner membrane. Functionally, component of the sil cation-efflux system that confers resistance to silver. May be part of a three-component cation/proton antiporter. This chain is Putative cation efflux system protein SilA (silA), found in Salmonella typhimurium.